The following is a 41-amino-acid chain: Large ribosomal subunit protein bL36 (41 aa).

It belongs to the bacterial ribosomal protein bL36 family.

This is Large ribosomal subunit protein bL36 from Bartonella henselae (strain ATCC 49882 / DSM 28221 / CCUG 30454 / Houston 1) (Rochalimaea henselae).